Consider the following 425-residue polypeptide: Proteinase-activated receptor 1 (425 aa).

A signal peptide spans 1–21; sequence MGPRRLLLVAACLCLCGPLLS. The propeptide at 22–41 is removed for receptor activation; the sequence is ARTRARRPASKATNATLDPR. N-linked (GlcNAc...) asparagine glycans are attached at residues Asn-35, Asn-62, and Asn-75. At 42–102 the chain is on the extracellular side; that stretch reads SFLLRNPNDK…SGYLTSSWLT (61 aa). Residues 103–128 form a helical membrane-spanning segment; sequence LFVPSVYTGVFVVSLPVNIMAIVVFI. Residues 129–137 are Cytoplasmic-facing; that stretch reads LKMKVKKPA. The helical transmembrane segment at 138 to 157 threads the bilayer; it reads VVYMLHLATADVLFVSVLPF. Over 158-176 the chain is Extracellular; that stretch reads KISYYLSGSDWQFGSELCR. An intrachain disulfide couples Cys-175 to Cys-254. A helical membrane pass occupies residues 177 to 198; the sequence is FVTAAFYCNMYASILLMTVISI. Over 199–218 the chain is Cytoplasmic; sequence DRFLAVVYPMQSLSWRTLGR. Residues 219 to 239 traverse the membrane as a helical segment; sequence ASFTCLAIWALAIAGVVPLLL. The Extracellular portion of the chain corresponds to 240 to 268; that stretch reads KEQTIQVPGLNITTCHDVLNETLLEGYYA. N-linked (GlcNAc...) asparagine glycans are attached at residues Asn-250 and Asn-259. Residues 269-288 traverse the membrane as a helical segment; it reads YYFSAFSAVFFFVPLIISTV. Topologically, residues 289-311 are cytoplasmic; sequence CYVSIIRCLSSSTVANRSKKSRA. The helical transmembrane segment at 312-334 threads the bilayer; the sequence is LFLSAAVFCIFIICFGPTNILLI. Over 335–350 the chain is Extracellular; sequence AHYSFLSHTSTTEAAY. The chain crosses the membrane as a helical span at residues 351-374; that stretch reads FAYLLCVCVSSISCCIDPLIYYYA. Residues 375 to 425 are Cytoplasmic-facing; it reads SSECQRYVYSILCCKESSDPSSSNSSGQLMASKMDTCSSNLNNSIYKKLLT. Position 418 is a phosphoserine (Ser-418).

The protein belongs to the G-protein coupled receptor 1 family. In terms of processing, proteolytic cleavage by thrombin generates a new N-terminus that functions as a tethered ligand. Also proteolytically cleaved by cathepsin CTSG. Cleavage at 41-Arg-|-Ser-42 by CTSG results in receptor activation while cleavage at 55-Phe-|-Trp-56 results in inhibition of receptor activation. Post-translationally, phosphorylated in the C-terminal tail; probably mediating desensitization prior to the uncoupling and internalization of the receptor.

The protein localises to the cell membrane. High affinity receptor that binds the activated thrombin, leading to calcium release from intracellular stores. The thrombin-activated receptor signaling pathway is mediated through PTX-insensitive G proteins, activation of phospholipase C resulting in the production of 1D-myo-inositol 1,4,5-trisphosphate (InsP3) which binds to InsP3 receptors causing calcium release from the stores. In astrocytes, the calcium released into the cytosol allows the Ca(2+)-dependent release of L-glutamate into the synaptic cleft through BEST1, that targets the neuronal postsynaptic GRIN2A/NMDAR receptor resulting in the synaptic plasticity regulation. May play a role in platelets activation and in vascular development. Mediates up-regulation of pro-inflammatory cytokines, such as MCP-1/CCL2 and IL6, triggered by coagulation factor Xa (F10) in cardiac fibroblasts and umbilical vein endothelial cells. This chain is Proteinase-activated receptor 1, found in Papio hamadryas (Hamadryas baboon).